Here is a 138-residue protein sequence, read N- to C-terminus: Acidic phospholipase A2 Ts-A6 (138 aa).

Residues 1 to 16 (MRALWIMAVLLLGVEG) form the signal peptide. 7 disulfides stabilise this stretch: cysteine 42/cysteine 131, cysteine 44/cysteine 60, cysteine 59/cysteine 111, cysteine 65/cysteine 138, cysteine 66/cysteine 104, cysteine 73/cysteine 97, and cysteine 91/cysteine 102. Tyrosine 43, glycine 45, and glycine 47 together coordinate Ca(2+). Residue histidine 63 is part of the active site. Ca(2+) is bound at residue aspartate 64. The active site involves aspartate 105.

Ca(2+) is required as a cofactor. In terms of tissue distribution, expressed by the venom gland.

Its subcellular location is the secreted. It carries out the reaction a 1,2-diacyl-sn-glycero-3-phosphocholine + H2O = a 1-acyl-sn-glycero-3-phosphocholine + a fatty acid + H(+). Its function is as follows. Snake venom phospholipase A2 (PLA2) that shows a moderate inhibition of ADP-induced human platelet aggregation when tested on platelet rich plasma. Exhibits high hydrolytic activities and prefers the anionic micelles (dPPC with deoxycholate) to the zwitterionic micelles (dPPC with Triton X-100). PLA2 catalyzes the calcium-dependent hydrolysis of the 2-acyl groups in 3-sn-phosphoglycerides. The protein is Acidic phospholipase A2 Ts-A6 of Trimeresurus stejnegeri (Chinese green tree viper).